Consider the following 1400-residue polypeptide: DNA-directed RNA polymerase subunit beta' (1400 aa).

Zn(2+) is bound by residues Cys-71, Cys-73, Cys-86, and Cys-89. 3 residues coordinate Mg(2+): Asp-462, Asp-464, and Asp-466. Residues Cys-810, Cys-884, Cys-891, and Cys-894 each coordinate Zn(2+). A disordered region spans residues 1377–1400 (REKQATIVPPAAPEAEPLALPPVE).

It belongs to the RNA polymerase beta' chain family. The RNAP catalytic core consists of 2 alpha, 1 beta, 1 beta' and 1 omega subunit. When a sigma factor is associated with the core the holoenzyme is formed, which can initiate transcription. Requires Mg(2+) as cofactor. Zn(2+) is required as a cofactor.

The catalysed reaction is RNA(n) + a ribonucleoside 5'-triphosphate = RNA(n+1) + diphosphate. Functionally, DNA-dependent RNA polymerase catalyzes the transcription of DNA into RNA using the four ribonucleoside triphosphates as substrates. This is DNA-directed RNA polymerase subunit beta' from Rhodopseudomonas palustris (strain HaA2).